The following is a 570-amino-acid chain: Proline--tRNA ligase (570 aa).

The interval alanine 238–proline 257 is disordered.

It belongs to the class-II aminoacyl-tRNA synthetase family. ProS type 1 subfamily. As to quaternary structure, homodimer.

It localises to the cytoplasm. The enzyme catalyses tRNA(Pro) + L-proline + ATP = L-prolyl-tRNA(Pro) + AMP + diphosphate. Functionally, catalyzes the attachment of proline to tRNA(Pro) in a two-step reaction: proline is first activated by ATP to form Pro-AMP and then transferred to the acceptor end of tRNA(Pro). As ProRS can inadvertently accommodate and process non-cognate amino acids such as alanine and cysteine, to avoid such errors it has two additional distinct editing activities against alanine. One activity is designated as 'pretransfer' editing and involves the tRNA(Pro)-independent hydrolysis of activated Ala-AMP. The other activity is designated 'posttransfer' editing and involves deacylation of mischarged Ala-tRNA(Pro). The misacylated Cys-tRNA(Pro) is not edited by ProRS. The polypeptide is Proline--tRNA ligase (Geobacter sulfurreducens (strain ATCC 51573 / DSM 12127 / PCA)).